Reading from the N-terminus, the 253-residue chain is 7-carboxy-7-deazaguanine synthase (253 aa).

Residues 12-14 and Arg-32 contribute to the substrate site; that span reads WQG. The 231-residue stretch at 23 to 253 folds into the Radical SAM core domain; that stretch reads AFGRRQIFVR…FQVHKYLNVL (231 aa). Residues Cys-36, Cys-40, and Cys-43 each contribute to the [4Fe-4S] cluster site. Ser-45 is a binding site for Mg(2+). Position 98 (Thr-98) interacts with substrate. Gly-100 contacts S-adenosyl-L-methionine.

This sequence belongs to the radical SAM superfamily. 7-carboxy-7-deazaguanine synthase family. In terms of assembly, homodimer. It depends on [4Fe-4S] cluster as a cofactor. Requires S-adenosyl-L-methionine as cofactor. Mg(2+) serves as cofactor.

The catalysed reaction is 6-carboxy-5,6,7,8-tetrahydropterin + H(+) = 7-carboxy-7-deazaguanine + NH4(+). It participates in purine metabolism; 7-cyano-7-deazaguanine biosynthesis. Its function is as follows. Catalyzes the complex heterocyclic radical-mediated conversion of 6-carboxy-5,6,7,8-tetrahydropterin (CPH4) to 7-carboxy-7-deazaguanine (CDG), a step common to the biosynthetic pathways of all 7-deazapurine-containing compounds. The sequence is that of 7-carboxy-7-deazaguanine synthase from Thermococcus kodakarensis (strain ATCC BAA-918 / JCM 12380 / KOD1) (Pyrococcus kodakaraensis (strain KOD1)).